Here is a 200-residue protein sequence, read N- to C-terminus: Glutathione S-transferase domain-containing protein DDB_G0273153/DDB_G0273923 (200 aa).

Residues 1–71 (MISSIYIFKI…YISNNHNFSG (71 aa)) enclose the GST N-terminal domain. Residues 73–195 (SLQESARVDD…INSNNINSQS (123 aa)) enclose the GST C-terminal domain.

Belongs to the GST superfamily.

The chain is Glutathione S-transferase domain-containing protein DDB_G0273153/DDB_G0273923 from Dictyostelium discoideum (Social amoeba).